Reading from the N-terminus, the 56-residue chain is Large ribosomal subunit protein bL33 (56 aa).

Basic and acidic residues predominate over residues 1–12; sequence MATKGGREKIKL. Residues 1–28 are disordered; sequence MATKGGREKIKLESTAGTGHFYTTSKNK. The segment covering 15-25 has biased composition (polar residues); that stretch reads TAGTGHFYTTS.

This sequence belongs to the bacterial ribosomal protein bL33 family.

The polypeptide is Large ribosomal subunit protein bL33 (Albidiferax ferrireducens (strain ATCC BAA-621 / DSM 15236 / T118) (Rhodoferax ferrireducens)).